A 366-amino-acid chain; its full sequence is MNKVVLLCRPGFEKECAAEITDKAGKREIFGFARVKENAGYVIYECYQPEDGEKLISELPFSSLIFARQWFVVGELLQHLPPEDRITPIVGMLQGVVEKGGELRVEVADTNESKELMKFCRKFTVPLRAALRDAGVLTNYETPKRPVVHVFFIAPGCCYTGYSFAHNNSPFYMGIPRLKFPSDAPSRSTLKLEEALHVFIPEDEWDERLANGMYAVDLGACPGGWTYQLVKRNMWVYSVDNGPMAQSLMDTGQVTWLREDGFRYRPNRNNISWMVCDMVEKPAKVTALMAQWLVNGWCRETIFNLKLPMKKRYEEVSHNLAYLQAQLDEHGVNAQIQARQLYHDREEVTVHVRRLWAAVGGRRDER.

S-adenosyl-L-methionine contacts are provided by residues serine 188, 221 to 224, aspartate 240, aspartate 260, and aspartate 277; that span reads CPGG. Lysine 306 acts as the Proton acceptor in catalysis.

It belongs to the class I-like SAM-binding methyltransferase superfamily. RNA methyltransferase RlmE family. RlmM subfamily. In terms of assembly, monomer.

It localises to the cytoplasm. The enzyme catalyses cytidine(2498) in 23S rRNA + S-adenosyl-L-methionine = 2'-O-methylcytidine(2498) in 23S rRNA + S-adenosyl-L-homocysteine + H(+). Its function is as follows. Catalyzes the 2'-O-methylation at nucleotide C2498 in 23S rRNA. The sequence is that of Ribosomal RNA large subunit methyltransferase M from Salmonella newport (strain SL254).